The chain runs to 145 residues: RNA polymerase-binding transcription factor DksA (145 aa).

Positions 108, 111, 129, and 132 each coordinate Zn(2+). A dksA C4-type zinc finger spans residues 108–132; it reads CDCCGEEIGIRRLEARPTADLCIDC.

Belongs to the DksA family. Interacts directly with the RNA polymerase.

The protein resides in the cytoplasm. In terms of biological role, transcription factor that acts by binding directly to the RNA polymerase (RNAP). Required for negative regulation of rRNA expression and positive regulation of several amino acid biosynthesis promoters. Also required for regulation of fis expression. In Haemophilus influenzae (strain ATCC 51907 / DSM 11121 / KW20 / Rd), this protein is RNA polymerase-binding transcription factor DksA.